A 257-amino-acid chain; its full sequence is MRILLTNDDGVHAGGLAALERIARTLSDDVWIVAPETDQSGLAHSLSLSEPLRLRKISDKHFALRGTPTDCVIMGIRQVMDIKPDLVLSGVNSGSNVADDVTYSGTIAGAIEGTMQGVRSFALSQAYLYEDGARIVPWEVCETHAPALLEKLMVLDLPDGTFLNLNFPNCRPDEVDGAEVTMQGKLAFNLQVDARSDGRGFPYYWLKFGERAGAFIEGTDIHALKHNKISVTPLKLDLTDYSVTDRVARALGYGAQV.

Residues Asp8, Asp9, Ser40, and Asn92 each contribute to the a divalent metal cation site.

The protein belongs to the SurE nucleotidase family. A divalent metal cation serves as cofactor.

Its subcellular location is the cytoplasm. The catalysed reaction is a ribonucleoside 5'-phosphate + H2O = a ribonucleoside + phosphate. Functionally, nucleotidase that shows phosphatase activity on nucleoside 5'-monophosphates. The chain is 5'-nucleotidase SurE from Rhizobium etli (strain ATCC 51251 / DSM 11541 / JCM 21823 / NBRC 15573 / CFN 42).